The sequence spans 248 residues: MGNKINPNGFRLGITKGWNSRWYAGKKQYSQLLKEDEKIRKLVSQKLAAAGIARIEIERAGQQVNVIISAAKPGIVIGKGGESIKQLRGEIERLVSAGTVAVNVAEIPNPNISAPLVALRIAEQIERRFAFRRAMKQAAQRVMESGARGVKVILSGRLGGAEQARTEKVLEGRVPLHTLRADIDYGTARAETTYGSLGIKVLVFNGEVIGGKTETLARPPRKSDERRREDGERPSRRRPTARRRPGGE.

The 70-residue stretch at 39–108 (IRKLVSQKLA…TVAVNVAEIP (70 aa)) folds into the KH type-2 domain. Positions 212–248 (KTETLARPPRKSDERRREDGERPSRRRPTARRRPGGE) are disordered. Basic and acidic residues predominate over residues 221-234 (RKSDERRREDGERP). Positions 235–248 (SRRRPTARRRPGGE) are enriched in basic residues.

It belongs to the universal ribosomal protein uS3 family. Part of the 30S ribosomal subunit. Forms a tight complex with proteins S10 and S14.

Binds the lower part of the 30S subunit head. Binds mRNA in the 70S ribosome, positioning it for translation. In Deinococcus geothermalis (strain DSM 11300 / CIP 105573 / AG-3a), this protein is Small ribosomal subunit protein uS3.